The chain runs to 97 residues: YcgL domain-containing protein PSPPH_1548 (97 aa).

Positions 3–87 constitute a YcgL domain; that stretch reads RICSIYRSPK…AEDDYIEHLP (85 aa).

The polypeptide is YcgL domain-containing protein PSPPH_1548 (Pseudomonas savastanoi pv. phaseolicola (strain 1448A / Race 6) (Pseudomonas syringae pv. phaseolicola (strain 1448A / Race 6))).